The following is a 156-amino-acid chain: Small ribosomal subunit protein uS7 (156 aa).

The protein belongs to the universal ribosomal protein uS7 family. Part of the 30S ribosomal subunit. Contacts proteins S9 and S11.

Functionally, one of the primary rRNA binding proteins, it binds directly to 16S rRNA where it nucleates assembly of the head domain of the 30S subunit. Is located at the subunit interface close to the decoding center, probably blocks exit of the E-site tRNA. This chain is Small ribosomal subunit protein uS7, found in Anoxybacillus flavithermus (strain DSM 21510 / WK1).